The sequence spans 348 residues: MO25-like protein At2g03410 (348 aa).

This sequence belongs to the Mo25 family.

The sequence is that of MO25-like protein At2g03410 from Arabidopsis thaliana (Mouse-ear cress).